We begin with the raw amino-acid sequence, 361 residues long: Histidinol-phosphate aminotransferase (361 aa).

Lysine 221 bears the N6-(pyridoxal phosphate)lysine mark.

It belongs to the class-II pyridoxal-phosphate-dependent aminotransferase family. Histidinol-phosphate aminotransferase subfamily. The cofactor is pyridoxal 5'-phosphate.

The enzyme catalyses L-histidinol phosphate + 2-oxoglutarate = 3-(imidazol-4-yl)-2-oxopropyl phosphate + L-glutamate. It functions in the pathway amino-acid biosynthesis; L-histidine biosynthesis; L-histidine from 5-phospho-alpha-D-ribose 1-diphosphate: step 7/9. The polypeptide is Histidinol-phosphate aminotransferase (Methanocella arvoryzae (strain DSM 22066 / NBRC 105507 / MRE50)).